We begin with the raw amino-acid sequence, 276 residues long: NADPH-dependent 7-cyano-7-deazaguanine reductase (276 aa).

Position 83–85 (83–85 (IES)) interacts with substrate. 85-86 (SK) is a binding site for NADPH. Cys184 functions as the Thioimide intermediate in the catalytic mechanism. Catalysis depends on Asp191, which acts as the Proton donor. 223-224 (HE) is a binding site for substrate. 252–253 (RG) contributes to the NADPH binding site.

It belongs to the GTP cyclohydrolase I family. QueF type 2 subfamily. Homodimer.

It is found in the cytoplasm. The catalysed reaction is 7-aminomethyl-7-carbaguanine + 2 NADP(+) = 7-cyano-7-deazaguanine + 2 NADPH + 3 H(+). It participates in tRNA modification; tRNA-queuosine biosynthesis. Its function is as follows. Catalyzes the NADPH-dependent reduction of 7-cyano-7-deazaguanine (preQ0) to 7-aminomethyl-7-deazaguanine (preQ1). This Pseudomonas putida (strain W619) protein is NADPH-dependent 7-cyano-7-deazaguanine reductase.